A 205-amino-acid chain; its full sequence is Guanylate kinase (205 aa).

In terms of domain architecture, Guanylate kinase-like spans 19 to 197 (PKLFTISAPA…AYRVLKSIFI (179 aa)). Position 26 to 33 (26 to 33 (APAGVGKT)) interacts with ATP.

The protein belongs to the guanylate kinase family.

It localises to the cytoplasm. The catalysed reaction is GMP + ATP = GDP + ADP. Essential for recycling GMP and indirectly, cGMP. The polypeptide is Guanylate kinase (gmk) (Chlamydia pneumoniae (Chlamydophila pneumoniae)).